A 363-amino-acid polypeptide reads, in one-letter code: tRNA U34 carboxymethyltransferase (363 aa).

Residues lysine 101, tryptophan 134, lysine 139, glycine 159, 181 to 183 (DPS), 221 to 222 (LE), methionine 237, tyrosine 241, and arginine 356 contribute to the carboxy-S-adenosyl-L-methionine site.

The protein belongs to the class I-like SAM-binding methyltransferase superfamily. CmoB family. Homotetramer.

The catalysed reaction is carboxy-S-adenosyl-L-methionine + 5-hydroxyuridine(34) in tRNA = 5-carboxymethoxyuridine(34) in tRNA + S-adenosyl-L-homocysteine + H(+). Catalyzes carboxymethyl transfer from carboxy-S-adenosyl-L-methionine (Cx-SAM) to 5-hydroxyuridine (ho5U) to form 5-carboxymethoxyuridine (cmo5U) at position 34 in tRNAs. This chain is tRNA U34 carboxymethyltransferase, found in Psychrobacter cryohalolentis (strain ATCC BAA-1226 / DSM 17306 / VKM B-2378 / K5).